Here is a 1407-residue protein sequence, read N- to C-terminus: DNA-directed RNA polymerase subunit beta' (1407 aa).

Zn(2+) is bound by residues C70, C72, C85, and C88. Mg(2+) is bound by residues D460, D462, and D464. C814, C888, C895, and C898 together coordinate Zn(2+).

The protein belongs to the RNA polymerase beta' chain family. As to quaternary structure, the RNAP catalytic core consists of 2 alpha, 1 beta, 1 beta' and 1 omega subunit. When a sigma factor is associated with the core the holoenzyme is formed, which can initiate transcription. It depends on Mg(2+) as a cofactor. Zn(2+) serves as cofactor.

The catalysed reaction is RNA(n) + a ribonucleoside 5'-triphosphate = RNA(n+1) + diphosphate. Functionally, DNA-dependent RNA polymerase catalyzes the transcription of DNA into RNA using the four ribonucleoside triphosphates as substrates. The protein is DNA-directed RNA polymerase subunit beta' of Pectobacterium atrosepticum (strain SCRI 1043 / ATCC BAA-672) (Erwinia carotovora subsp. atroseptica).